The following is a 203-amino-acid chain: Urease accessory protein UreG (203 aa).

14–21 (GPVGSGKT) serves as a coordination point for GTP.

The protein belongs to the SIMIBI class G3E GTPase family. UreG subfamily. Homodimer. UreD, UreF and UreG form a complex that acts as a GTP-hydrolysis-dependent molecular chaperone, activating the urease apoprotein by helping to assemble the nickel containing metallocenter of UreC. The UreE protein probably delivers the nickel.

Its subcellular location is the cytoplasm. Its function is as follows. Facilitates the functional incorporation of the urease nickel metallocenter. This process requires GTP hydrolysis, probably effectuated by UreG. The protein is Urease accessory protein UreG of Allorhizobium ampelinum (strain ATCC BAA-846 / DSM 112012 / S4) (Agrobacterium vitis (strain S4)).